A 216-amino-acid polypeptide reads, in one-letter code: Small ribosomal subunit protein uS3c (216 aa).

One can recognise a KH type-2 domain in the interval 43-115; that stretch reads FENDWGTLYN…QTRIKVIQVN (73 aa).

It belongs to the universal ribosomal protein uS3 family. As to quaternary structure, part of the 30S ribosomal subunit.

It localises to the plastid. The protein localises to the chloroplast. The sequence is that of Small ribosomal subunit protein uS3c (rps3) from Emiliania huxleyi (Coccolithophore).